Here is a 354-residue protein sequence, read N- to C-terminus: Ferrochelatase (354 aa).

Residues H204 and E306 each coordinate Fe cation.

Belongs to the ferrochelatase family.

Its subcellular location is the cytoplasm. It carries out the reaction heme b + 2 H(+) = protoporphyrin IX + Fe(2+). It functions in the pathway porphyrin-containing compound metabolism; protoheme biosynthesis; protoheme from protoporphyrin-IX: step 1/1. Functionally, catalyzes the ferrous insertion into protoporphyrin IX. In Coxiella burnetii (strain RSA 493 / Nine Mile phase I), this protein is Ferrochelatase.